A 229-amino-acid chain; its full sequence is Deleted in azoospermia-like (229 aa).

Positions 47–128 constitute an RRM domain; it reads NTLFVGGIDM…PAIMKERSSR (82 aa). The 27-residue stretch at 172–198 folds into the DAZ domain; sequence PYSYSSPPGIMVPQVPMNYAQTTYAYQ.

It belongs to the RRM DAZ family. Testis and ovary specific. In ovary, it is localized in the cortex of oocytes. At the onset of embryogenesis, maternal product is located at the vegetal pole, before migrating toward blastomeres through cytoplasmic streams as early embryogenesis proceededs.

It localises to the cytoplasm. Its function is as follows. RNA-binding protein involved in gametogenesis in both males and females. Acts by binding to the 3'-UTR of mRNA, specifically recognizing GUU triplets, and promoting the translation of key transcripts. Establishes oocyte polarity through interaction with Bucky ball (BUC). Interacts with Bucky ball (BUC) mRNA to mediate Balbiani body formation and oocyte polarity during early oogenesis. This is Deleted in azoospermia-like (dazl) from Danio rerio (Zebrafish).